Reading from the N-terminus, the 1050-residue chain is SGGFDFSFLPQPPQEKDGGRYYGVGLGPGPMGLMGPRGPPGASGAPGPQGFGPAGEPGEPGQTGPAGARGPPGAPGKAGEDGHPGKPGRPGERGVVGPQGARGFPGTPGLPGFKGIRGHNGLDGLKGQPGAGVKGEPGAPGENGTPGQTGARGLPGERGRVGAPGPAGARGSDGSVGPVGPAGPIGSAGPPGFPGAPGPKGELGPVGNTGPSGPAGPRGEQGLPGVSGPVGPPGNPGANGLTGAKGAAGLPGVAGAPGLPGPRGIPGPVGASGATGARGLVGEPGPAGSKGESGNKGEPGSAGPQGPPGSSGEEGKRGPNGESGSTGPTGPPGLRGNPGSRGLPGADGRAGVIGPAGARGASGPAGVRGPSGDTGRPGEPGLMGARGLPGSPGNVGPAGKEGPAGLPGIDGRPGPIGPAGARGEAGNIGFPGPKGPAGDPGKAGEKGHAGLAGNRGAPGPDGNNGAQGPPGPQGVQGGKGEQGPAGPPGFQGLPGPAGTTGEAGKPGERGIPGEFGLPGPAGPRGERGPPGESGAVGPSGAIGSRGPSGPPGPDGNKGEPGVVTAGPAGSGGLPGERGAAGIPGGKGEKGETGLRGEVGTTGRDGARGAPGAVGAPGPAGATGDRGEAGAAGPAGPAGPRGSPGERGEVGPAGPNGFAGPAGAAGQPGAKGERGTKGPKGENGIVGPTGPVGSAGPAGPNGPAGPAGSRGDGGPPGMTGFPGAAGRTGPPGPSGITGPPGPPGAAGKEGLRGPRGDQGPVGRTGETGAGGPPGFTGEKGPSGEPGTAGPPGTAGPQGLLGAPGILGLPGSRGERGLPGVAGAVGEPGPLGIAGPPGARGPSGAVGPGVNGAPGETGRDGNPGSDGPPGRDGLPGHKGERGYAGNAGPVGAAGAPGPHGTVGPAGKHGNRGEPGPVGSVGPVGALGPRGPSGPQGIRGDKGEPGDKGPRGLPGLKGHNGLQGLPGLAGQHGDQGSPGPVGPAGPRGPAGPSGPAGKDGRTGHPGAVGPAGIRGSQGSQGPSGPPGPPGPPGPPGASGGGYDFGYEGDFYRA.

Residues 1-1050 (SGGFDFSFLP…FGYEGDFYRA (1050 aa)) form a disordered region. 4-hydroxyproline is present on residues proline 10 and proline 13. Positions 20–32 (RYYGVGLGPGPMG) are enriched in gly residues. 2 stretches are compositionally biased toward low complexity: residues 33-46 (LMGPRGPPGASGAP) and 56-77 (EPGEPGQTGPAGARGPPGAPGK). 4-hydroxyproline occurs at positions 40 and 46. Residues 78-92 (AGEDGHPGKPGRPGE) show a composition bias toward basic and acidic residues. At lysine 114 the chain carries 5-hydroxylysine; alternate. A glycan (O-linked (Gal...) hydroxylysine; alternate) is linked at lysine 114. Composition is skewed to low complexity over residues 161–190 (VGAPGPAGARGSDGSVGPVGPAGPIGSAGP), 236–257 (PGANGLTGAKGAAGLPGVAGAP), 298–311 (EPGSAGPQGPPGSS), 320–338 (NGESGSTGPTGPPGLRGNP), and 355–371 (PAGARGASGPAGVRGPS). Residues proline 377 and proline 380 each carry the 4-hydroxyproline modification. Composition is skewed to low complexity over residues 406 to 425 (LPGIDGRPGPIGPAGARGEA) and 452 to 467 (AGNRGAPGPDGNNGAQ). Positions 474-483 (GVQGGKGEQG) are enriched in gly residues. 3 stretches are compositionally biased toward low complexity: residues 530 to 547 (PGESGAVGPSGAIGSRGP), 598 to 642 (VGTT…PRGS), and 649 to 669 (VGPAGPNGFAGPAGAAGQPGA). Over residues 670-679 (KGERGTKGPK) the composition is skewed to basic and acidic residues. Residues 687 to 697 (PTGPVGSAGPA) show a composition bias toward low complexity. Positions 707–716 (GSRGDGGPPG) are enriched in gly residues. Over residues 718–727 (TGFPGAAGRT) the composition is skewed to low complexity. Residues 764–773 (GETGAGGPPG) show a composition bias toward gly residues. 4 stretches are compositionally biased toward low complexity: residues 781-808 (SGEPGTAGPPGTAGPQGLLGAPGILGLP), 816-841 (LPGVAGAVGEPGPLGIAGPPGARGPS), 881-903 (YAGNAGPVGAAGAPGPHGTVGPA), and 911-926 (EPGPVGSVGPVGALGP). Positions 936 to 947 (RGDKGEPGDKGP) are enriched in basic and acidic residues. A compositionally biased stretch (pro residues) spans 1020–1032 (SGPPGPPGPPGPP).

This sequence belongs to the fibrillar collagen family. Trimers of one alpha 2(I) and two alpha 1(I) chains. Interacts (via C-terminus) with TMEM131 (via PapD-L domain); the interaction is direct and is involved in assembly and TRAPPIII ER-to-Golgi transport complex-dependent secretion of collagen. In terms of processing, prolines at the third position of the tripeptide repeating unit (G-X-Y) are hydroxylated in some or all of the chains. In terms of tissue distribution, expressed in bones.

It localises to the secreted. The protein localises to the extracellular space. Its subcellular location is the extracellular matrix. In terms of biological role, type I collagen is a member of group I collagen (fibrillar forming collagen). The sequence is that of Collagen alpha-2(I) chain from Megatherium americanum (Giant ground sloth).